Here is a 64-residue protein sequence, read N- to C-terminus: Prokaryotic ubiquitin-like protein Pup (64 aa).

Over residues 1-11 (MAQEQTKRTGG) the composition is skewed to basic and acidic residues. Residues 1-37 (MAQEQTKRTGGGDEDDTPGADGAAGQERREKLAEDTD) form a disordered region. Residues 21–58 (DGAAGQERREKLAEDTDDLLDEIDDVLEENAEDFVRAY) form an ARC ATPase binding region. Residues 24–52 (AGQERREKLAEDTDDLLDEIDDVLEENAE) adopt a coiled-coil conformation. At Gln-64 the chain carries Deamidated glutamine. Residue Gln-64 forms an Isoglutamyl lysine isopeptide (Gln-Lys) (interchain with K-? in acceptor proteins) linkage.

The protein belongs to the prokaryotic ubiquitin-like protein family. Strongly interacts with the proteasome-associated ATPase ARC through a hydrophobic interface; the interacting region of Pup lies in its C-terminal half. There is one Pup binding site per ARC hexamer ring. In terms of processing, is modified by deamidation of its C-terminal glutamine to glutamate by the deamidase Dop, a prerequisite to the subsequent pupylation process.

It functions in the pathway protein degradation; proteasomal Pup-dependent pathway. Its function is as follows. Protein modifier that is covalently attached to lysine residues of substrate proteins, thereby targeting them for proteasomal degradation. The tagging system is termed pupylation. The polypeptide is Prokaryotic ubiquitin-like protein Pup (Rhodococcus jostii (strain RHA1)).